The chain runs to 509 residues: Probable basic-leucine zipper transcription factor H (509 aa).

The disordered stretch occupies residues 1-42 (MMNSPRSLDSSDGSVDSSSVYSGTSSFGSSFTSSTGSGFTNS). Residues 10-39 (SSDGSVDSSSVYSGTSSFGSSFTSSTGSGF) show a composition bias toward low complexity. Residues 50–113 (AKKKKIRQMQ…NENYLKINQL (64 aa)) enclose the bZIP domain. Positions 51 to 77 (KKKKIRQMQNRQSAAQYRERKKEYLEK) are basic motif. A leucine-zipper region spans residues 78–99 (LETIVDNLESDRNQLLQQTKQL). Disordered regions lie at residues 134-185 (LLSK…SNNG), 223-275 (FSHL…SRFN), 290-414 (IENV…IINN), and 465-509 (SNNN…GIPK). Composition is skewed to low complexity over residues 226-248 (LQQQ…SPIP), 255-269 (PIQQ…QNIN), 292-350 (NVNN…SNRS), 361-414 (QQQQ…IINN), 465-483 (SNNN…NSPS), and 490-509 (NGGI…GIPK).

The protein belongs to the bZIP family.

It localises to the nucleus. In terms of biological role, probable transcriptional regulator. The protein is Probable basic-leucine zipper transcription factor H (bzpH) of Dictyostelium discoideum (Social amoeba).